The sequence spans 885 residues: DDT domain-containing protein DDB_G0282237 (885 aa).

The 106-residue stretch at 20–125 folds into the WAC domain; it reads EEYFVIKFTK…GEIVSFKKAN (106 aa). Disordered stretches follow at residues 141–184, 201–264, and 367–431; these read ESDE…INAL, DDEN…SVRK, and LEDT…KENE. The segment covering 154–180 has biased composition (low complexity); it reads SSSSSSTTTTTTTPTTPPTTTTTTSSS. The span at 210–264 shows a compositional bias: basic and acidic residues; that stretch reads KNNGDTSSDKKGEKEKEKEKEKEKEKEKEKEKEKEKEKEKEKEKEKDSDTKSVRK. Residues 217-260 are a coiled coil; the sequence is SDKKGEKEKEKEKEKEKEKEKEKEKEKEKEKEKEKEKEKDSDTK. A compositionally biased stretch (acidic residues) spans 367–379; sequence LEDTEEESVDIES. Low complexity predominate over residues 380–396; sequence NDNSNSNGNSNSNNNLD. The 61-residue stretch at 443–503 folds into the DDT domain; it reads SNTFGDFLMV…MKTIFTLPSY (61 aa). The stretch at 530-565 forms a coiled coil; the sequence is FQNEVKRIAIEEKEKQEKLKQLEEQNIRMLNLANEL. Disordered stretches follow at residues 562–632 and 707–744; these read ANEL…WKEE and KQDDAAAAAEDDDENNEDDEEQQQQEVKKPKGAKQKKP. Acidic residues predominate over residues 567–577; the sequence is GSDDEDDEMKL. Over residues 578 to 603 the composition is skewed to basic and acidic residues; the sequence is DEDGNEIKKDVEMKDNDGTKDTKKDD. Coiled coils occupy residues 593-628 and 674-782; these read NDGTKDTKKDDEENEEEEEEEEEEEEEVASDEGEEE and ASEK…RDRN. 2 stretches are compositionally biased toward acidic residues: residues 604–631 and 715–729; these read EENEEEEEEEEEEEEEVASDEGEEEWKE and AEDDDENNEDDEEQQ.

It is found in the nucleus. The chain is DDT domain-containing protein DDB_G0282237 from Dictyostelium discoideum (Social amoeba).